The primary structure comprises 297 residues: HTH-type transcriptional regulator ArgP (297 aa).

The 57-residue stretch at 4–60 (PDYRTLQALDAVIRERGFERAAQKLCITQSAVSQRIKQLENMFGQPLLVRTVPPRPT) folds into the HTH lysR-type domain. Residues 21-40 (FERAAQKLCITQSAVSQRIK) constitute a DNA-binding region (H-T-H motif).

It belongs to the LysR transcriptional regulatory family. As to quaternary structure, homodimer.

Controls the transcription of genes involved in arginine and lysine metabolism. This is HTH-type transcriptional regulator ArgP from Enterobacter sp. (strain 638).